Here is a 296-residue protein sequence, read N- to C-terminus: Ribonuclease H2 subunit A (296 aa).

The 223-residue stretch at 14 to 236 (PCLMGIDEAG…CTTHLKGEVE (223 aa)) folds into the RNase H type-2 domain. The a divalent metal cation site is built by Asp-20, Glu-21, and Asp-127.

It belongs to the RNase HII family. Eukaryotic subfamily. Requires Mn(2+) as cofactor. Mg(2+) is required as a cofactor.

The enzyme catalyses Endonucleolytic cleavage to 5'-phosphomonoester.. Functionally, catalytic subunit of RNase HII, an endonuclease that specifically degrades the RNA of RNA:DNA hybrids. Participates in DNA replication, possibly by mediating the removal of lagging-strand Okazaki fragment RNA primers during DNA replication. Mediates the excision of single ribonucleotides from DNA:RNA duplexes. The chain is Ribonuclease H2 subunit A from Arabidopsis thaliana (Mouse-ear cress).